The sequence spans 231 residues: Ribose-5-phosphate isomerase A (231 aa).

Substrate-binding positions include 28-31 (TGST), 83-86 (DGAD), and 96-99 (KGGG). Glutamate 105 functions as the Proton acceptor in the catalytic mechanism. Lysine 123 serves as a coordination point for substrate.

Belongs to the ribose 5-phosphate isomerase family. As to quaternary structure, homodimer.

It catalyses the reaction aldehydo-D-ribose 5-phosphate = D-ribulose 5-phosphate. The protein operates within carbohydrate degradation; pentose phosphate pathway; D-ribose 5-phosphate from D-ribulose 5-phosphate (non-oxidative stage): step 1/1. Its function is as follows. Catalyzes the reversible conversion of ribose-5-phosphate to ribulose 5-phosphate. In Parvibaculum lavamentivorans (strain DS-1 / DSM 13023 / NCIMB 13966), this protein is Ribose-5-phosphate isomerase A.